A 166-amino-acid polypeptide reads, in one-letter code: Transmembrane protein 278 (166 aa).

Residues 1–15 (MSDQERETEEDEGGD) are compositionally biased toward acidic residues. Positions 1-28 (MSDQERETEEDEGGDPSDTAPMLPQRLP) are disordered. The next 3 membrane-spanning stretches (helical) occupy residues 39 to 59 (GWAS…WALA), 65 to 85 (LLLP…VVYL), and 111 to 131 (AAVI…ASAA).

The protein belongs to the TMEM88 family.

The protein localises to the membrane. The chain is Transmembrane protein 278 (TMEM278) from Bos taurus (Bovine).